The sequence spans 131 residues: uncharacterized protein (131 aa).

The protein resides in the mitochondrion. This is an uncharacterized protein from Arabidopsis thaliana (Mouse-ear cress).